A 403-amino-acid polypeptide reads, in one-letter code: Ribosomal RNA large subunit methyltransferase I (403 aa).

Residues 9 to 88 (YPRLVLSKGR…ESIDIAFFTR (80 aa)) form the PUA domain.

Belongs to the methyltransferase superfamily. RlmI family.

Its subcellular location is the cytoplasm. It catalyses the reaction cytidine(1962) in 23S rRNA + S-adenosyl-L-methionine = 5-methylcytidine(1962) in 23S rRNA + S-adenosyl-L-homocysteine + H(+). Specifically methylates the cytosine at position 1962 (m5C1962) of 23S rRNA. This chain is Ribosomal RNA large subunit methyltransferase I, found in Salmonella agona (strain SL483).